Here is a 437-residue protein sequence, read N- to C-terminus: Vacuolar cation/proton exchanger 2 (437 aa).

The segment at 1–29 is disordered; the sequence is MMGAEKAEGMEELELEEGGGSPSPSPMTA. Over 1–65 the chain is Cytoplasmic; that stretch reads MMGAEKAEGM…KWRRALTSVR (65 aa). Residues 66 to 86 form a helical membrane-spanning segment; sequence VVILQAKINVLLPFGPLAVML. Over 87–88 the chain is Extracellular; the sequence is HY. A helical transmembrane segment spans residues 89 to 109; it reads LSANHQGWVFLFSLIGITPLA. The Cytoplasmic segment spans residues 110 to 126; that stretch reads ERLGYATEQLALYTGPT. The chain crosses the membrane as a helical span at residues 127–147; it reads IGGLLNATFGNATEMIISLYA. Residues 136-171 form a cation selection region; sequence GNATEMIISLYALKNGMIRVVQQSLLGSILSNMLLV. The Extracellular portion of the chain corresponds to 148 to 161; it reads LKNGMIRVVQQSLL. A helical transmembrane segment spans residues 162 to 182; sequence GSILSNMLLVLGCAFFAGGLV. The Cytoplasmic segment spans residues 183–194; sequence HPSRDQVFNKAS. A helical transmembrane segment spans residues 195-215; sequence AVVNSGLLLMAVLGLMFPAVL. The Extracellular portion of the chain corresponds to 216–228; it reads HFTHSEVQYGKSE. A helical transmembrane segment spans residues 229–249; the sequence is VSLSRFSSCIMLVAYASYLFF. Over 250-281 the chain is Cytoplasmic; sequence QLKSQRSLYSPIGEQEEEVTEDEEEEKEITQG. The chain crosses the membrane as a helical span at residues 282–302; it reads EAICWLFVLTIWISILSGYLV. At 303–310 the chain is on the extracellular side; it reads DAIQGASE. The helical transmembrane segment at 311–331 threads the bilayer; it reads SLNMPVAFISVILLPIVGNAA. The cation selection stretch occupies residues 328-363; sequence GNAAEHASAIMFAMKDKLDITLGVAIGSSTQISMFV. Topologically, residues 332 to 352 are cytoplasmic; that stretch reads EHASAIMFAMKDKLDITLGVA. Residues 353–373 traverse the membrane as a helical segment; it reads IGSSTQISMFVIPFCVVIGWI. Topologically, residues 374–379 are extracellular; that stretch reads MGQQMD. The helical transmembrane segment at 380 to 400 threads the bilayer; sequence LNFQLFETATLFITVLVVAFM. At 401-408 the chain is on the cytoplasmic side; that stretch reads LQEGTSNY. Residues 409 to 429 traverse the membrane as a helical segment; sequence FKGLMLILCYLIVAASFFVHV. Residues 430-437 lie on the Extracellular side of the membrane; it reads DPDSSNNK.

This sequence belongs to the Ca(2+):cation antiporter (CaCA) (TC 2.A.19) family. Cation/proton exchanger (CAX) subfamily. In terms of tissue distribution, expressed in roots and shoots.

The protein resides in the vacuole membrane. Functionally, vacuolar cation/proton exchanger (CAX). Translocates Ca(2+) and other metal ions into vacuoles using the proton gradient formed by H(+)-ATPase and H(+)-pyrophosphatase. The sequence is that of Vacuolar cation/proton exchanger 2 (CAX2) from Oryza sativa subsp. japonica (Rice).